We begin with the raw amino-acid sequence, 98 residues long: NADH-ubiquinone oxidoreductase chain 4L (98 aa).

Transmembrane regions (helical) follow at residues 2–22 (PSISINITLAFTMALTGMLVF), 29–49 (SLLCLEGMMLSMFILSILFIM), and 61–81 (ILLLVLAACEAAIGLALLVMV).

Belongs to the complex I subunit 4L family. Core subunit of respiratory chain NADH dehydrogenase (Complex I) which is composed of 45 different subunits.

Its subcellular location is the mitochondrion inner membrane. The catalysed reaction is a ubiquinone + NADH + 5 H(+)(in) = a ubiquinol + NAD(+) + 4 H(+)(out). Core subunit of the mitochondrial membrane respiratory chain NADH dehydrogenase (Complex I) which catalyzes electron transfer from NADH through the respiratory chain, using ubiquinone as an electron acceptor. Part of the enzyme membrane arm which is embedded in the lipid bilayer and involved in proton translocation. In Lepilemur mitsinjoensis (Mitsinjo sportive lemur), this protein is NADH-ubiquinone oxidoreductase chain 4L (MT-ND4L).